Reading from the N-terminus, the 188-residue chain is Elongation factor P (188 aa).

This sequence belongs to the elongation factor P family.

The protein resides in the cytoplasm. It functions in the pathway protein biosynthesis; polypeptide chain elongation. Functionally, involved in peptide bond synthesis. Stimulates efficient translation and peptide-bond synthesis on native or reconstituted 70S ribosomes in vitro. Probably functions indirectly by altering the affinity of the ribosome for aminoacyl-tRNA, thus increasing their reactivity as acceptors for peptidyl transferase. In Gluconobacter oxydans (strain 621H) (Gluconobacter suboxydans), this protein is Elongation factor P.